A 474-amino-acid polypeptide reads, in one-letter code: Coiled-coil domain-containing protein 149 (474 aa).

Coiled-coil stretches lie at residues 1-199 and 259-286; these read MANQ…RKNS and IQHQ…LEVS. Disordered stretches follow at residues 301–388 and 405–474; these read SDPT…EEEV and AELE…TVKT. Over residues 323 to 337 the composition is skewed to basic and acidic residues; it reads TENKADPKDGEAQKQ. Low complexity predominate over residues 343–353; it reads CAAAEALTAPE. A coiled-coil region spans residues 385–414; it reads EEEVNSLGREIIKLTKEQAAAELEEVRRES.

This sequence belongs to the CCDC149 family.

The chain is Coiled-coil domain-containing protein 149 (CCDC149) from Homo sapiens (Human).